The following is a 356-amino-acid chain: A-type ATP synthase subunit C (356 aa).

It belongs to the V-ATPase V0D/AC39 subunit family. Has multiple subunits with at least A(3), B(3), C, D, E, F, H, I and proteolipid K(x).

Its subcellular location is the cell membrane. Component of the A-type ATP synthase that produces ATP from ADP in the presence of a proton gradient across the membrane. The protein is A-type ATP synthase subunit C of Thermoplasma acidophilum (strain ATCC 25905 / DSM 1728 / JCM 9062 / NBRC 15155 / AMRC-C165).